Consider the following 618-residue polypeptide: Grainyhead-like protein 1 homolog (618 aa).

The tract at residues Met1–Ser91 is transcription activation. The segment covering Arg74 to Lys92 has biased composition (basic and acidic residues). Positions Arg74 to Asn94 are disordered. Residue Thr208 is modified to Phosphothreonine. One can recognise a Grh/CP2 DB domain in the interval Ser248–Ile474. Interaction with DNA regions lie at residues Thr380–Lys389 and Arg427–Arg430.

It belongs to the grh/CP2 family. Grainyhead subfamily. Binds DNA as homodimer. Homodimer, also forms heterodimers with GRHL2 or GRHL3. Methylation at Arg-9 and Lys-116 may be involved in regulating transcriptional activation. As to expression, isoform 1 is highly expressed in brain, pancreas, tonsil, placenta and kidney. Isoform 2 is highly expressed in brain and liver. Expressed at very low levels in non-steroidogenic cells.

It localises to the nucleus. Its function is as follows. Transcription factor involved in epithelial development. Binds directly to the consensus DNA sequence 5'-AACCGGTT-3'. Important regulator of DSG1 in the context of hair anchorage and epidermal differentiation, participates in the maintenance of the skin barrier. There is no genetic interaction with GRHL3, nor functional cooperativity due to diverse target gene selectivity during epithelia development. May play a role in regulating glucose homeostasis and insulin signaling. Functions as a transcription activator. Functionally, may function as a repressor in tissues where both isoform 1 and isoform 2 are expressed. In Homo sapiens (Human), this protein is Grainyhead-like protein 1 homolog.